The primary structure comprises 397 residues: B3 domain-containing protein At4g34400 (397 aa).

The segment at residues 14–107 is a DNA-binding region (TF-B3); the sequence is PRFFTVFVSH…IFEVSIFRGY (94 aa). Residues 118 to 255 are disordered; that stretch reads ELEEEEEDSV…SSYAPDKEDT (138 aa). Residues 137–160 show a composition bias toward basic and acidic residues; the sequence is TGAKSEMKNTVPEGRDKGKSKVEV. Acidic residues-rich tracts occupy residues 161–186, 212–227, and 235–246; these read VEDSDDDEEEDSVYSESSEETETDTD, SSDDEEDEEEDSDSDY, and DIEENSISEEDS.

The protein localises to the nucleus. The polypeptide is B3 domain-containing protein At4g34400 (Arabidopsis thaliana (Mouse-ear cress)).